The chain runs to 169 residues: uncharacterized protein (169 aa).

A mitochondrion-targeting transit peptide spans 1 to 91 (MFSSTFRRLA…NKEQYTVRCL (91 aa)). The segment at 54–76 (PQPKSPGSLPSSTRTAPNPNGEE) is disordered. Polar residues predominate over residues 61–71 (SLPSSTRTAPN).

It is found in the mitochondrion. This is an uncharacterized protein from Trypanosoma brucei brucei (strain 927/4 GUTat10.1).